The primary structure comprises 279 residues: Putative carbamate hydrolase RutD (279 aa).

Positions 23-126 (PVVVLISGLG…LVSVNGWLRI (104 aa)) constitute an AB hydrolase-1 domain.

It belongs to the AB hydrolase superfamily. Hydrolase RutD family.

It catalyses the reaction carbamate + 2 H(+) = NH4(+) + CO2. Involved in pyrimidine catabolism. May facilitate the hydrolysis of carbamate, a reaction that can also occur spontaneously. This is Putative carbamate hydrolase RutD from Escherichia coli O17:K52:H18 (strain UMN026 / ExPEC).